The chain runs to 342 residues: MTQAVDIGTIQTLIRLEVPDQVPLTGSIPYDALVKKLKTPVDPELLQRLIRFTRLVGFLDEDAEGAVKHSPMSAIFVNDPDTAGQARFMADFGIRPCSFIYESIKLDPSGEAARQGPLALMAREPGAREGPTFFEVLEKDPVNRKRWHDGMAVHNDSMVRHVAGAYDWGTVQSLVDIGGSEGHVAAVIVNAFPHIQITVQDRPEIIEKARQRGDRHPNIIFEEHDFFTPQPRIADAYFLRLILHDWNDADCTRIVRQISSALRPGARLLIMDAVLPEPGEGSLQSERRLRRSDIGMYTLFSAKERSLAQMRRLVEDCDSRLRFEKLYTPPGSHASMLSWICE.

Residue Asp201 participates in S-adenosyl-L-methionine binding. The active-site Proton acceptor is His244.

Belongs to the class I-like SAM-binding methyltransferase superfamily. Cation-independent O-methyltransferase family. In terms of assembly, homodimer.

It carries out the reaction 6-hydroxytryprostatin B + S-adenosyl-L-methionine = tryprostatin A + S-adenosyl-L-homocysteine + H(+). The protein operates within alkaloid biosynthesis. 6-hydroxytryprostatin B O-methyltransferase; part of the gene cluster that mediates the biosynthesis of fumitremorgins, indole alkaloids that carry not only intriguing chemical structures, but also interesting biological and pharmacological activities. The biosynthesis of fumitremorgin-type alkaloids begins by condensation of the two amino acids L-tryptophan and L-proline to brevianamide F, catalyzed by the non-ribosomal peptide synthetase ftmA. Brevianamide F is then prenylated by the prenyltransferase ftmPT1/ftmB in the presence of dimethylallyl diphosphate, resulting in the formation of tryprostatin B. The three cytochrome P450 monooxygenases, ftmP450-1/ftmC, ftmP450-2/ftmE and ftmP450-3/FtmG, are responsible for the conversion of tryprostatin B to 6-hydroxytryprostatin B, tryprostatin A to fumitremorgin C and fumitremorgin C to 12,13-dihydroxyfumitremorgin C, respectively. The putative methyltransferase ftmMT/ftmD is expected for the conversion of 6-hydroxytryprostatin B to tryprostatin A. FtmPT2/FtmH catalyzes the prenylation of 12,13-dihydroxyfumitre-morgin C in the presence of dimethylallyl diphosphate, resulting in the formation of fumitremorgin B. Fumitremorgin B is further converted to verruculogen by ftmOx1/ftmF via the insertion of an endoperoxide bond between the two prenyl moieties. In some fungal species, verruculogen is further converted to fumitremorgin A, but the enzymes involved in this step have not been identified yet. The sequence is that of 6-hydroxytryprostatin B O-methyltransferase from Aspergillus fumigatus (Neosartorya fumigata).